Reading from the N-terminus, the 339-residue chain is Heat-inducible transcription repressor HrcA (339 aa).

The protein belongs to the HrcA family.

Negative regulator of class I heat shock genes (grpE-dnaK-dnaJ and groELS operons). Prevents heat-shock induction of these operons. This chain is Heat-inducible transcription repressor HrcA, found in Clostridium perfringens (strain SM101 / Type A).